The primary structure comprises 130 residues: Small ribosomal subunit protein uS9 (130 aa).

The protein belongs to the universal ribosomal protein uS9 family.

This Stenotrophomonas maltophilia (strain R551-3) protein is Small ribosomal subunit protein uS9.